We begin with the raw amino-acid sequence, 499 residues long: Protein-cysteine N-palmitoyltransferase HHAT (499 aa).

The Cytoplasmic portion of the chain corresponds to 1–5; that stretch reads MLPGW. A helical transmembrane segment spans residues 6-22; the sequence is ELTLCLLVSLGFHFRSF. Over 23–67 the chain is Lumenal; it reads YEVYKVSREHEEELDQEFELEMDTLFGGLKKDPTDFEWNFWMEWG. Residues 68-84 form a helical membrane-spanning segment; sequence KRRLVWLFIGHMAVSQL. The Cytoplasmic portion of the chain corresponds to 85–94; the sequence is ATLLTKKHRP. The tract at residues 91–155 is essential for palmitoylation of SHH; that stretch reads KHRPWIVMVY…TLRLQSVEEV (65 aa). The stretch at 95–119 is an intramembrane region; it reads WIVMVYGMWACWCVLGAPGVVMVLL. Topologically, residues 120–131 are cytoplasmic; sequence HSTIAFCVAQFR. The chain crosses the membrane as a helical span at residues 132 to 148; sequence SVLLSWLCSLLLLSTLR. Residues 149–162 are Lumenal-facing; sequence LQSVEEVKRRWYKT. The chain crosses the membrane as a helical span at residues 163 to 183; sequence ENEYYLLQFTLTVRCLYYTSF. The Cytoplasmic portion of the chain corresponds to 184-208; sequence SLELCRQPPSAQPTPSAQGASHSYP. Cys-188 carries the S-palmitoyl cysteine lipid modification. Residues 209 to 223 lie within the membrane without spanning it; that stretch reads WLLTYVFYYPVFHNG. At 224–249 the chain is on the cytoplasmic side; that stretch reads PILNFPEFFRQMQQPELNSLQHSLCI. Cys-248 carries S-palmitoyl cysteine lipidation. The helical transmembrane segment at 250 to 277 threads the bilayer; that stretch reads VAKGLGRLLCWWWLAELMVHLMYMHALY. At 278 to 287 the chain is on the lumenal side; it reads SSAPLLESVS. The chain crosses the membrane as a helical span at residues 288 to 316; the sequence is CWTLGGLALAQVLFFYVKYLVLFGVPALL. Topologically, residues 317–369 are cytoplasmic; that stretch reads MRLDGLTPPPLPRCVSTMFSFTGMWRYFDVGLHNFLIRYVYIPLGGSQHGLLG. Cys-330 carries S-palmitoyl cysteine lipidation. The chain crosses the membrane as a helical span at residues 370 to 386; sequence TLLSTATTFAFVSYWHG. Residue His-385 is part of the active site. The Lumenal segment spans residues 387–389; that stretch reads SYE. A helical transmembrane segment spans residues 390 to 405; the sequence is DLWCWAALNWLGVTVE. The Cytoplasmic portion of the chain corresponds to 406-433; sequence SGVRRLLETPCVRETLARHLSPQAHHRL. Residue Cys-416 is the site of S-palmitoyl cysteine attachment. The chain crosses the membrane as a helical span at residues 434 to 454; the sequence is HALLAACSTSMLILFNLVFLG. 454–461 lines the GTP pocket; that stretch reads GGIQVGKT. Residues 455 to 468 are Lumenal-facing; sequence GIQVGKTYWNRIFL. A helical transmembrane segment spans residues 469–487; the sequence is QGWPWVTLSVLGFLYCYSH. Over 488 to 499 the chain is Cytoplasmic; it reads VDIAWAQTYTVL.

Belongs to the membrane-bound acyltransferase family. HHAT subfamily.

It is found in the endoplasmic reticulum membrane. It localises to the golgi apparatus membrane. It catalyses the reaction N-terminal L-cysteinyl-[protein] + hexadecanoyl-CoA = N-terminal N-hexadecanoyl-L-cysteinyl-[protein] + CoA + H(+). It carries out the reaction N-terminal L-cysteinyl-[protein]-C-terminal glycyl cholesterol ester + hexadecanoyl-CoA = N-terminal N-hexadecanoyl-L-cysteinyl-[protein]-C-terminal glycyl cholesterol ester + CoA + H(+). Palmitoyl acyltransferase that catalyzes N-terminal palmitoylation of SHH; which is required for SHH signaling during limb development. It also catalyzes N-terminal palmitoylation of DHH. Promotes the transfer of palmitoyl-CoA from the cytoplasmic to the luminal side of the endoplasmic reticulum membrane, where SHH palmitoylation occurs. Plays a role in proper testis cord formation and the differentiation of Leydig cells. The sequence is that of Protein-cysteine N-palmitoyltransferase HHAT (Hhat) from Mus musculus (Mouse).